The chain runs to 98 residues: NADH-ubiquinone oxidoreductase chain 4L (98 aa).

3 helical membrane passes run 1–21 (MNLI…GLIF), 26–46 (IINI…LFVL), and 61–81 (LYIL…VVIL).

It belongs to the complex I subunit 4L family.

Its subcellular location is the mitochondrion membrane. It carries out the reaction a ubiquinone + NADH + 5 H(+)(in) = a ubiquinol + NAD(+) + 4 H(+)(out). Core subunit of the mitochondrial membrane respiratory chain NADH dehydrogenase (Complex I) that is believed to belong to the minimal assembly required for catalysis. Complex I functions in the transfer of electrons from NADH to the respiratory chain. The immediate electron acceptor for the enzyme is believed to be ubiquinone. This Dictyostelium citrinum (Slime mold) protein is NADH-ubiquinone oxidoreductase chain 4L (nad4L).